The following is a 426-amino-acid chain: Protein CgeD (426 aa).

It to B.subtilis spore coat polysaccharide biosynthesis protein SpsA.

May be involved in maturation of the outermost layer of the spore. This Bacillus subtilis (strain 168) protein is Protein CgeD (cgeD).